A 274-amino-acid chain; its full sequence is Large ribosomal subunit protein uL2cy (274 aa).

Disordered stretches follow at residues 1 to 25 and 223 to 274; these read MAIH…VKSN and MNPV…RRSK. Residues 7-25 are compositionally biased toward polar residues; that stretch reads KTSTPSTRNGTVDSQVKSN.

It belongs to the universal ribosomal protein uL2 family. In terms of assembly, part of the 50S ribosomal subunit.

The protein localises to the plastid. It localises to the chloroplast. This Atropa belladonna (Belladonna) protein is Large ribosomal subunit protein uL2cy (rpl2-B).